The chain runs to 1378 residues: DNA-directed RNA polymerase subunit beta (1378 aa).

The protein belongs to the RNA polymerase beta chain family. The RNAP catalytic core consists of 2 alpha, 1 beta, 1 beta' and 1 omega subunit. When a sigma factor is associated with the core the holoenzyme is formed, which can initiate transcription.

It catalyses the reaction RNA(n) + a ribonucleoside 5'-triphosphate = RNA(n+1) + diphosphate. In terms of biological role, DNA-dependent RNA polymerase catalyzes the transcription of DNA into RNA using the four ribonucleoside triphosphates as substrates. This chain is DNA-directed RNA polymerase subunit beta, found in Campylobacter jejuni subsp. jejuni serotype O:23/36 (strain 81-176).